Consider the following 425-residue polypeptide: Serine--tRNA ligase (425 aa).

231-233 provides a ligand contact to L-serine; it reads TAE. Residues 262-264 and Val-278 contribute to the ATP site; that span reads RTE. An L-serine-binding site is contributed by Glu-285. 349 to 352 is an ATP binding site; it reads EVTS. Thr-384 lines the L-serine pocket.

It belongs to the class-II aminoacyl-tRNA synthetase family. Type-1 seryl-tRNA synthetase subfamily. As to quaternary structure, homodimer. The tRNA molecule binds across the dimer.

The protein localises to the cytoplasm. It catalyses the reaction tRNA(Ser) + L-serine + ATP = L-seryl-tRNA(Ser) + AMP + diphosphate + H(+). The catalysed reaction is tRNA(Sec) + L-serine + ATP = L-seryl-tRNA(Sec) + AMP + diphosphate + H(+). It participates in aminoacyl-tRNA biosynthesis; selenocysteinyl-tRNA(Sec) biosynthesis; L-seryl-tRNA(Sec) from L-serine and tRNA(Sec): step 1/1. Functionally, catalyzes the attachment of serine to tRNA(Ser). Is also able to aminoacylate tRNA(Sec) with serine, to form the misacylated tRNA L-seryl-tRNA(Sec), which will be further converted into selenocysteinyl-tRNA(Sec). The polypeptide is Serine--tRNA ligase (Dictyoglomus thermophilum (strain ATCC 35947 / DSM 3960 / H-6-12)).